Here is a 372-residue protein sequence, read N- to C-terminus: Queuine tRNA-ribosyltransferase (372 aa).

D92 serves as the catalytic Proton acceptor. Substrate-binding positions include 92–96 (DSGGY), D146, Q188, and G215. Positions 246 to 252 (GIGSLRE) are RNA binding. The active-site Nucleophile is the D265. The RNA binding; important for wobble base 34 recognition stretch occupies residues 270–274 (TRLGR). Residues C303, C305, C308, and H334 each coordinate Zn(2+).

Belongs to the queuine tRNA-ribosyltransferase family. As to quaternary structure, homodimer. Within each dimer, one monomer is responsible for RNA recognition and catalysis, while the other monomer binds to the replacement base PreQ1. It depends on Zn(2+) as a cofactor.

It catalyses the reaction 7-aminomethyl-7-carbaguanine + guanosine(34) in tRNA = 7-aminomethyl-7-carbaguanosine(34) in tRNA + guanine. It participates in tRNA modification; tRNA-queuosine biosynthesis. Its function is as follows. Catalyzes the base-exchange of a guanine (G) residue with the queuine precursor 7-aminomethyl-7-deazaguanine (PreQ1) at position 34 (anticodon wobble position) in tRNAs with GU(N) anticodons (tRNA-Asp, -Asn, -His and -Tyr). Catalysis occurs through a double-displacement mechanism. The nucleophile active site attacks the C1' of nucleotide 34 to detach the guanine base from the RNA, forming a covalent enzyme-RNA intermediate. The proton acceptor active site deprotonates the incoming PreQ1, allowing a nucleophilic attack on the C1' of the ribose to form the product. After dissociation, two additional enzymatic reactions on the tRNA convert PreQ1 to queuine (Q), resulting in the hypermodified nucleoside queuosine (7-(((4,5-cis-dihydroxy-2-cyclopenten-1-yl)amino)methyl)-7-deazaguanosine). This chain is Queuine tRNA-ribosyltransferase, found in Prochlorococcus marinus (strain MIT 9211).